Here is a 430-residue protein sequence, read N- to C-terminus: Serine--tRNA ligase (430 aa).

237–239 provides a ligand contact to L-serine; sequence TAE. ATP is bound at residue 268-270; sequence RSE. Glutamate 291 contacts L-serine. Residue 355–358 participates in ATP binding; the sequence is EISS. Residue serine 391 participates in L-serine binding.

This sequence belongs to the class-II aminoacyl-tRNA synthetase family. Type-1 seryl-tRNA synthetase subfamily. As to quaternary structure, homodimer. The tRNA molecule binds across the dimer.

It is found in the cytoplasm. The catalysed reaction is tRNA(Ser) + L-serine + ATP = L-seryl-tRNA(Ser) + AMP + diphosphate + H(+). It catalyses the reaction tRNA(Sec) + L-serine + ATP = L-seryl-tRNA(Sec) + AMP + diphosphate + H(+). It functions in the pathway aminoacyl-tRNA biosynthesis; selenocysteinyl-tRNA(Sec) biosynthesis; L-seryl-tRNA(Sec) from L-serine and tRNA(Sec): step 1/1. Catalyzes the attachment of serine to tRNA(Ser). Is also able to aminoacylate tRNA(Sec) with serine, to form the misacylated tRNA L-seryl-tRNA(Sec), which will be further converted into selenocysteinyl-tRNA(Sec). This Klebsiella pneumoniae (strain 342) protein is Serine--tRNA ligase.